The sequence spans 122 residues: UPF0102 protein Gmet_2864 (122 aa).

The protein belongs to the UPF0102 family.

The chain is UPF0102 protein Gmet_2864 from Geobacter metallireducens (strain ATCC 53774 / DSM 7210 / GS-15).